A 584-amino-acid chain; its full sequence is Inactive metallocarboxypeptidase ECM14 (584 aa).

The first 20 residues, 1–20 (MHLLPVITAVALIYTPLASA), serve as a signal peptide directing secretion. A propeptide spanning residues 21–174 (VPSSSNPQFP…QAVYESYPQP (154 aa)) is cleaved from the precursor. Residues 202-524 (DYQPLSVMTP…NAVLEFGKFL (323 aa)) form the Peptidase M14 domain. Residues His-267 and Glu-270 each coordinate Zn(2+). Substrate-binding positions include 267–270 (HARE), Arg-325, and 342–343 (DR). Cys-336 and Cys-359 are oxidised to a cystine. Residues Asn-383 and Asn-389 are each glycosylated (N-linked (GlcNAc...) asparagine). Residue His-399 coordinates Zn(2+). 400–401 (SY) is a binding site for substrate. The tract at residues 564–584 (QQLDDEDGEADSHWVLRTQRS) is disordered.

This sequence belongs to the peptidase M14 family. The cofactor is Zn(2+).

The protein resides in the vacuole. It localises to the secreted. In terms of biological role, inactive carboxypeptidase that may play a role in cell wall organization and biogenesis. The polypeptide is Inactive metallocarboxypeptidase ECM14 (ECM14) (Uncinocarpus reesii (strain UAMH 1704)).